The following is a 574-amino-acid chain: DNA mismatch repair protein MutL (574 aa).

The protein belongs to the DNA mismatch repair MutL/HexB family.

Functionally, this protein is involved in the repair of mismatches in DNA. It is required for dam-dependent methyl-directed DNA mismatch repair. May act as a 'molecular matchmaker', a protein that promotes the formation of a stable complex between two or more DNA-binding proteins in an ATP-dependent manner without itself being part of a final effector complex. The polypeptide is DNA mismatch repair protein MutL (Coxiella burnetii (strain RSA 331 / Henzerling II)).